We begin with the raw amino-acid sequence, 413 residues long: Serine hydroxymethyltransferase (413 aa).

(6S)-5,6,7,8-tetrahydrofolate-binding positions include L116 and 120 to 122 (GHL). The residue at position 225 (K225) is an N6-(pyridoxal phosphate)lysine. 349-351 (SPF) is a (6S)-5,6,7,8-tetrahydrofolate binding site.

It belongs to the SHMT family. Homodimer. It depends on pyridoxal 5'-phosphate as a cofactor.

It localises to the cytoplasm. It carries out the reaction (6R)-5,10-methylene-5,6,7,8-tetrahydrofolate + glycine + H2O = (6S)-5,6,7,8-tetrahydrofolate + L-serine. It functions in the pathway one-carbon metabolism; tetrahydrofolate interconversion. Its pathway is amino-acid biosynthesis; glycine biosynthesis; glycine from L-serine: step 1/1. Catalyzes the reversible interconversion of serine and glycine with tetrahydrofolate (THF) serving as the one-carbon carrier. This reaction serves as the major source of one-carbon groups required for the biosynthesis of purines, thymidylate, methionine, and other important biomolecules. Also exhibits THF-independent aldolase activity toward beta-hydroxyamino acids, producing glycine and aldehydes, via a retro-aldol mechanism. This Levilactobacillus brevis (strain ATCC 367 / BCRC 12310 / CIP 105137 / JCM 1170 / LMG 11437 / NCIMB 947 / NCTC 947) (Lactobacillus brevis) protein is Serine hydroxymethyltransferase.